Consider the following 327-residue polypeptide: Interleukin-12 subunit beta (327 aa).

The first 22 residues, 1–22, serve as a signal peptide directing secretion; the sequence is MHPQQLVVSWFSLVLLTSPIVA. Residues 23-106 enclose the Ig-like C2-type domain; it reads IWELEKNVYV…LSRSLLLLHK (84 aa). Residues Cys50 and Cys90 are joined by a disulfide bond. N-linked (GlcNAc...) asparagine glycosylation occurs at Asn223. The 90-residue stretch at 238-327 folds into the Fibronectin type-III domain; sequence PPKNLQLRPL…WSEWASVSCS (90 aa).

The protein belongs to the IL-12B family. As to quaternary structure, heterodimer with IL12A; disulfide-linked. The heterodimer is known as interleukin IL-12. Heterodimer with IL23A; disulfide-linked. The heterodimer is known as interleukin IL-23. Also secreted as a monomer. Interacts with NBR1; this interaction promotes IL-12 secretion.

It localises to the secreted. Cytokine that can act as a growth factor for activated T and NK cells, enhance the lytic activity of NK/lymphokine-activated killer cells, and stimulate the production of IFN-gamma by resting PBMC. Functionally, associates with IL23A to form the IL-23 interleukin, a heterodimeric cytokine which functions in innate and adaptive immunity. IL-23 may constitute with IL-17 an acute response to infection in peripheral tissues. IL-23 binds to a heterodimeric receptor complex composed of IL12RB1 and IL23R, activates the Jak-Stat signaling cascade, stimulates memory rather than naive T-cells and promotes production of pro-inflammatory cytokines. IL-23 induces autoimmune inflammation and thus may be responsible for autoimmune inflammatory diseases and may be important for tumorigenesis. The polypeptide is Interleukin-12 subunit beta (IL12B) (Cervus elaphus (Red deer)).